The chain runs to 86 residues: Large ribosomal subunit protein bL27 (86 aa).

Belongs to the bacterial ribosomal protein bL27 family.

The chain is Large ribosomal subunit protein bL27 from Christiangramia forsetii (strain DSM 17595 / CGMCC 1.15422 / KT0803) (Gramella forsetii).